A 212-amino-acid chain; its full sequence is Ribosomal RNA small subunit methyltransferase G (212 aa).

S-adenosyl-L-methionine-binding positions include glycine 80, leucine 85, 131-132 (AE), and arginine 146.

It belongs to the methyltransferase superfamily. RNA methyltransferase RsmG family.

Its subcellular location is the cytoplasm. The enzyme catalyses guanosine(527) in 16S rRNA + S-adenosyl-L-methionine = N(7)-methylguanosine(527) in 16S rRNA + S-adenosyl-L-homocysteine. In terms of biological role, specifically methylates the N7 position of guanine in position 527 of 16S rRNA. In Xanthomonas campestris pv. campestris (strain 8004), this protein is Ribosomal RNA small subunit methyltransferase G.